The chain runs to 368 residues: Peptide chain release factor 2 (368 aa).

Glutamine 251 is modified (N5-methylglutamine).

This sequence belongs to the prokaryotic/mitochondrial release factor family. Methylated by PrmC. Methylation increases the termination efficiency of RF2.

It localises to the cytoplasm. Peptide chain release factor 2 directs the termination of translation in response to the peptide chain termination codons UGA and UAA. The protein is Peptide chain release factor 2 of Streptomyces avermitilis (strain ATCC 31267 / DSM 46492 / JCM 5070 / NBRC 14893 / NCIMB 12804 / NRRL 8165 / MA-4680).